We begin with the raw amino-acid sequence, 81 residues long: Adenoregulin-related peptide (81 aa).

Positions methionine 1–cysteine 22 are cleaved as a signal peptide. A propeptide spanning residues glutamate 23–methionine 43 is cleaved from the precursor. Residues glutamate 24–glycine 46 form a disordered region. The span at glutamate 30–glutamine 40 shows a compositional bias: acidic residues. At isoleucine 78 the chain carries Isoleucine amide. The propeptide occupies glycine 79–glutamine 81.

Expressed by the skin glands.

The protein localises to the secreted. Its function is as follows. Has antibacterial activity against Gram-positive bacterium M.luteus NCT C2665 and against Gram-negative bacterium E.coli K12D31. The chain is Adenoregulin-related peptide from Agalychnis callidryas (Red-eyed tree frog).